The sequence spans 446 residues: Serine decarboxylase 3 (446 aa).

Residue His162 coordinates substrate. Lys274 carries the N6-(pyridoxal phosphate)lysine modification.

Belongs to the group II decarboxylase family. Pyridoxal 5'-phosphate is required as a cofactor.

It carries out the reaction L-serine + H(+) = ethanolamine + CO2. In terms of biological role, catalyzes the biosynthesis of ethanolamine from serine. Decarboxylation of free serine is the major source of ethanolamine production in plants and ethanolamine metabolism is crucial for the synthesis of choline, phosphatidylethanolamine (PE) and phosphatidylcholine (PC), and thus for plant growth. The chain is Serine decarboxylase 3 from Oryza sativa subsp. japonica (Rice).